Reading from the N-terminus, the 462-residue chain is Glycine--tRNA ligase (462 aa).

Substrate-binding residues include Arg-100 and Glu-170. ATP-binding positions include 202–204 (RNE), 212–217 (FRTREF), 287–288 (EL), and 331–334 (GVER). 217 to 221 (FEQME) contacts substrate. Residue 327 to 331 (EPSVG) participates in substrate binding.

The protein belongs to the class-II aminoacyl-tRNA synthetase family. Homodimer.

The protein resides in the cytoplasm. It carries out the reaction tRNA(Gly) + glycine + ATP = glycyl-tRNA(Gly) + AMP + diphosphate. Functionally, catalyzes the attachment of glycine to tRNA(Gly). The polypeptide is Glycine--tRNA ligase (Malacoplasma penetrans (strain HF-2) (Mycoplasma penetrans)).